The primary structure comprises 150 residues: Large ribosomal subunit protein bL9 (150 aa).

The protein belongs to the bacterial ribosomal protein bL9 family.

In terms of biological role, binds to the 23S rRNA. This chain is Large ribosomal subunit protein bL9, found in Alkalilimnicola ehrlichii (strain ATCC BAA-1101 / DSM 17681 / MLHE-1).